The chain runs to 567 residues: Protein ESMERALDA 1 (567 aa).

A disordered region spans residues 1–41 (MLAKNRLPGSGHTTPSPPASPRRSPRYRHGRSKAAAGSRFP). Over 1-65 (MLAKNRLPGS…ILLSVLLRRQ (65 aa)) the chain is Cytoplasmic. Basic residues predominate over residues 23 to 32 (RSPRYRHGRS). A helical; Signal-anchor for type II membrane protein transmembrane segment spans residues 66–86 (GIFLFAPLIYISCMLLYMGTV). The Lumenal segment spans residues 87–567 (SFDVVPIIQR…TPESRPPPAT (481 aa)). Asn-121, Asn-145, Asn-184, and Asn-238 each carry an N-linked (GlcNAc...) asparagine glycan. 331–333 (HLR) is a substrate binding site. Residues Asn-403, Asn-419, Asn-449, Asn-538, and Asn-554 are each glycosylated (N-linked (GlcNAc...) asparagine).

Belongs to the glycosyltransferase GT106 family. Ubiquitous.

It is found in the golgi apparatus membrane. It functions in the pathway protein modification; protein glycosylation. In terms of biological role, glycosyltransferase that plays a role in cell adhesion. This chain is Protein ESMERALDA 1, found in Arabidopsis thaliana (Mouse-ear cress).